The primary structure comprises 1773 residues: Plexin-2 (1773 aa).

A signal peptide spans 1 to 19; the sequence is MLFIESAFLVLTSLSAAEA. The Sema domain occupies 20 to 436; that stretch reads ATPFEGGVKQ…MPYGIVMEEL (417 aa). At 20-1130 the chain is on the extracellular side; sequence ATPFEGGVKQ…SDHALPSRLS (1111 aa). An N-linked (GlcNAc...) asparagine glycan is attached at N65. 9 cysteine pairs are disulfide-bonded: C83–C90, C117–C125, C239–C341, C255–C292, C310–C328, C439–C456, C445–C479, C448–C465, and C459–C471. N241 is a glycosylation site (N-linked (GlcNAc...) asparagine). Residues 438-480 form the PSI 1 domain; sequence TCAHHESCTDCQVSVDPLCQWCHPTQSCTTSSRCSGPLTTQCP. A glycan (N-linked (GlcNAc...) asparagine) is linked at N494. An intrachain disulfide couples C516 to C538. N-linked (GlcNAc...) asparagine glycosylation is present at N566. Residues 571-608 form the PSI 2 domain; sequence DCAGYSTCSTCMSSEFGCQWCSHKCSSSCGSASAKACV. Residues N670 and N693 are each glycosylated (N-linked (GlcNAc...) asparagine). Positions 698–739 constitute a PSI 3 domain; the sequence is SCSNLAADCSSCLALSPSLSCGWCNRKCSHECHESKATAVCD. IPT/TIG domains lie at 741 to 829, 831 to 916, and 919 to 1006; these read PKID…FSFV, VSIF…FEYR, and PSVN…FLMD. N-linked (GlcNAc...) asparagine glycosylation is found at N855, N877, N975, and N1007. Residues 1131–1151 traverse the membrane as a helical segment; that stretch reads FLILGLLLFTVITLIVMCLIF. A coiled-coil region spans residues 1150 to 1188; sequence IFKRRRQEREKEYRKIQLQMENLENNVRKECKQAFAELQ. Residues 1152 to 1764 lie on the Cytoplasmic side of the membrane; it reads KRRRQEREKE…LHVCLETDNH (613 aa).

It belongs to the plexin family. Interacts with mab-20.

The protein resides in the cell membrane. Its function is as follows. Involved as a receptor for mab-20/sema-2a in the formation or stabilization of cell-cell contacts at several stages of epithelial morphogenesis. In early embryonic development, required for proper ventral closure of the epidermis. During male tail morphogenesis, involved in precursor cell sorting and in the formation of distinct sensory rays. Involved in axon guidance of SDQL neurons during neurogenesis. The chain is Plexin-2 (plx-2) from Caenorhabditis briggsae.